The chain runs to 224 residues: ATP synthase subunit a (224 aa).

6 consecutive transmembrane segments (helical) span residues 17–37 (LSLN…IYWL), 72–92 (IFIS…FPYI), 99–119 (LTLT…YGWI), 125–145 (MFAH…MVCI), 170–190 (LLLT…VTFL), and 195–215 (IALL…FAVL).

The protein belongs to the ATPase A chain family. F-type ATPases have 2 components, CF(1) - the catalytic core - and CF(0) - the membrane proton channel. CF(1) has five subunits: alpha(3), beta(3), gamma(1), delta(1), epsilon(1). CF(0) has three main subunits: a, b and c.

It is found in the mitochondrion inner membrane. Functionally, mitochondrial membrane ATP synthase (F(1)F(0) ATP synthase or Complex V) produces ATP from ADP in the presence of a proton gradient across the membrane which is generated by electron transport complexes of the respiratory chain. F-type ATPases consist of two structural domains, F(1) - containing the extramembraneous catalytic core and F(0) - containing the membrane proton channel, linked together by a central stalk and a peripheral stalk. During catalysis, ATP synthesis in the catalytic domain of F(1) is coupled via a rotary mechanism of the central stalk subunits to proton translocation. Key component of the proton channel; it may play a direct role in the translocation of protons across the membrane. This Drosophila simulans (Fruit fly) protein is ATP synthase subunit a (mt:ATPase6).